The chain runs to 288 residues: Chemotaxis protein methyltransferase 2 (288 aa).

Residues 1–280 (MNEIVITDTD…TGYYKPHKGK (280 aa)) form the CheR-type methyltransferase domain. Residues asparagine 76, threonine 78, arginine 82, glutamate 119, aspartate 145, 200-201 (NL), and 219-220 (RN) contribute to the S-adenosyl-L-methionine site.

The catalysed reaction is L-glutamyl-[protein] + S-adenosyl-L-methionine = [protein]-L-glutamate 5-O-methyl ester + S-adenosyl-L-homocysteine. Functionally, methylation of the membrane-bound methyl-accepting chemotaxis proteins (MCP) to form gamma-glutamyl methyl ester residues in MCP. This Vibrio cholerae serotype O1 (strain ATCC 39315 / El Tor Inaba N16961) protein is Chemotaxis protein methyltransferase 2 (cheR2).